The primary structure comprises 111 residues: Large ribosomal subunit protein uL22 (111 aa).

Belongs to the universal ribosomal protein uL22 family. In terms of assembly, part of the 50S ribosomal subunit.

Functionally, this protein binds specifically to 23S rRNA; its binding is stimulated by other ribosomal proteins, e.g. L4, L17, and L20. It is important during the early stages of 50S assembly. It makes multiple contacts with different domains of the 23S rRNA in the assembled 50S subunit and ribosome. Its function is as follows. The globular domain of the protein is located near the polypeptide exit tunnel on the outside of the subunit, while an extended beta-hairpin is found that lines the wall of the exit tunnel in the center of the 70S ribosome. This Clostridium novyi (strain NT) protein is Large ribosomal subunit protein uL22.